Reading from the N-terminus, the 721-residue chain is DNA ligase (721 aa).

The segment covering 1–19 (MTAKKQGAQASASAPSGDS) has biased composition (low complexity). Positions 1-23 (MTAKKQGAQASASAPSGDSPAER) are disordered. Residues 48 to 52 (DADYD), 97 to 98 (SL), and E162 contribute to the NAD(+) site. The N6-AMP-lysine intermediate role is filled by K164. Residues R185, E221, K338, and K362 each contribute to the NAD(+) site. Residues C456, C459, C474, and C480 each contribute to the Zn(2+) site. Positions 639 to 721 (RAPLPLAGKT…LKLLAEVGAA (83 aa)) constitute a BRCT domain.

Belongs to the NAD-dependent DNA ligase family. LigA subfamily. Mg(2+) is required as a cofactor. It depends on Mn(2+) as a cofactor.

It catalyses the reaction NAD(+) + (deoxyribonucleotide)n-3'-hydroxyl + 5'-phospho-(deoxyribonucleotide)m = (deoxyribonucleotide)n+m + AMP + beta-nicotinamide D-nucleotide.. Its function is as follows. DNA ligase that catalyzes the formation of phosphodiester linkages between 5'-phosphoryl and 3'-hydroxyl groups in double-stranded DNA using NAD as a coenzyme and as the energy source for the reaction. It is essential for DNA replication and repair of damaged DNA. The chain is DNA ligase from Cupriavidus metallidurans (strain ATCC 43123 / DSM 2839 / NBRC 102507 / CH34) (Ralstonia metallidurans).